The following is a 496-amino-acid chain: Genome polyprotein (496 aa).

At 1 to 447 (SRCTHLENRD…HTVLGGAFNS (447 aa)) the chain is on the extracellular side. 6 disulfide bridges follow: C3-C30, C60-C116, C60-C121, C74-C105, C92-C116, and C92-C121. Residues 98 to 111 (DRGWGNHCGLFGKG) form a fusion peptide region. N154 carries N-linked (GlcNAc...) asparagine; by host glycosylation. 2 cysteine pairs are disulfide-bonded: C186/C290 and C307/C338. The chain crosses the membrane as a helical span at residues 448-468 (IFGGVGFLPKLLMGVALAWLG). Over 469-479 (LNTRNPTMSMS) the chain is Cytoplasmic. A helical membrane pass occupies residues 480 to 496 (FLLAGGLVLAMTLGVGA).

In terms of assembly, homodimer; in the endoplasmic reticulum and Golgi. Post-translationally, N-glycosylated.

The protein localises to the virion membrane. It localises to the host endoplasmic reticulum membrane. Its function is as follows. Binds to host cell surface receptor and mediates fusion between viral and cellular membranes. Envelope protein is synthesized in the endoplasmic reticulum in the form of heterodimer with protein prM. They play a role in virion budding in the ER, and the newly formed immature particle is covered with 60 spikes composed of heterodimer between precursor prM and envelope protein E. The virion is transported to the Golgi apparatus where the low pH causes dissociation of PrM-E heterodimers and formation of E homodimers. prM-E cleavage is ineficient, and many virions are only partially matured. These uncleaved prM would play a role in immune evasion. This is Genome polyprotein from Bos taurus (Bovine).